We begin with the raw amino-acid sequence, 805 residues long: Leucine--tRNA ligase (805 aa).

A 'HIGH' region motif is present at residues 41 to 52 (PYPSGAGLHVGH). The short motif at 577 to 581 (KMSKS) is the 'KMSKS' region element. K580 is an ATP binding site.

Belongs to the class-I aminoacyl-tRNA synthetase family.

It localises to the cytoplasm. It carries out the reaction tRNA(Leu) + L-leucine + ATP = L-leucyl-tRNA(Leu) + AMP + diphosphate. The polypeptide is Leucine--tRNA ligase (Staphylococcus aureus (strain JH1)).